The primary structure comprises 230 residues: C-reactive protein (230 aa).

The N-terminal stretch at 1–19 (MEKLLWCLLITISFSQAFG) is a signal peptide. Positions 24–223 (SKQAFVFPGV…DVFIKPQLWP (200 aa)) constitute a Pentraxin (PTX) domain. Cys-55 and Cys-114 are oxidised to a cystine. Ca(2+) is bound at residue Asn-78. A glycan (N-linked (GlcNAc...) asparagine) is linked at Asn-147. Ca(2+)-binding residues include Glu-155, Gln-156, Asp-157, and Gln-167. A disulfide bond links Cys-227 and Cys-228.

The protein belongs to the pentraxin family. As to quaternary structure, homopentamer; disulfide-linked. Pentraxin (or pentaxin) have a discoid arrangement of 5 non-covalently bound subunits. Two of the five chains form a dimer linked by two interchain disulfide bonds located in the C-terminal heptapeptide and specific to rat CRP. Interacts with FCN1; may regulate monocyte activation by FCN1. Ca(2+) serves as cofactor. Post-translationally, the last two cysteines are involved either in interchain disulfide bonds or in an intrachain bond. As to expression, found in plasma.

The protein resides in the secreted. Displays several functions associated with host defense: it promotes agglutination, bacterial capsular swelling, phagocytosis and complement fixation through its calcium-dependent binding to phosphorylcholine. Can interact with DNA and histones and may scavenge nuclear material released from damaged circulating cells. This chain is C-reactive protein (Crp), found in Rattus norvegicus (Rat).